A 101-amino-acid chain; its full sequence is PAT complex subunit Asterix (101 aa).

The segment at 1–26 is disordered; the sequence is MADPRRPARVTRYKPPTTESNPALED. Over 1–27 the chain is Cytoplasmic; it reads MADPRRPARVTRYKPPTTESNPALEDP. Residues 28–46 traverse the membrane as a helical segment; it reads TPDYMNLLGMVFSMCGLML. Position 47 (Lys47) is a topological domain, lumenal. Residues 48–65 form a helical membrane-spanning segment; sequence LKWCAWIAVYCSFISFAN. At 66-69 the chain is on the cytoplasmic side; sequence SRSS. Residues 70 to 90 form a helical membrane-spanning segment; it reads EDTKQMMSSFMLSISAVVMSY. The Lumenal portion of the chain corresponds to 91–101; sequence LQNPQPMSPPW.

It belongs to the Asterix family. In terms of assembly, component of the multi-pass translocon (MPT) complex.

It is found in the endoplasmic reticulum membrane. Functionally, component of the multi-pass translocon (MPT) complex that mediates insertion of multi-pass membrane proteins into the lipid bilayer of membranes. The MPT complex takes over after the SEC61 complex: following membrane insertion of the first few transmembrane segments of proteins by the SEC61 complex, the MPT complex occludes the lateral gate of the SEC61 complex to promote insertion of subsequent transmembrane regions. The sequence is that of PAT complex subunit Asterix (WDR83OS) from Gallus gallus (Chicken).